The following is a 227-amino-acid chain: Urease accessory protein UreF (227 aa).

The protein belongs to the UreF family. As to quaternary structure, ureD, UreF and UreG form a complex that acts as a GTP-hydrolysis-dependent molecular chaperone, activating the urease apoprotein by helping to assemble the nickel containing metallocenter of UreC. The UreE protein probably delivers the nickel.

Its subcellular location is the cytoplasm. In terms of biological role, required for maturation of urease via the functional incorporation of the urease nickel metallocenter. The protein is Urease accessory protein UreF of Methylobacillus flagellatus (strain ATCC 51484 / DSM 6875 / VKM B-1610 / KT).